The primary structure comprises 205 residues: Methylthioribulose-1-phosphate dehydratase (205 aa).

Positions 96 and 98 each coordinate Zn(2+).

The protein belongs to the aldolase class II family. MtnB subfamily. Zn(2+) is required as a cofactor.

The catalysed reaction is 5-(methylsulfanyl)-D-ribulose 1-phosphate = 5-methylsulfanyl-2,3-dioxopentyl phosphate + H2O. The protein operates within amino-acid biosynthesis; L-methionine biosynthesis via salvage pathway; L-methionine from S-methyl-5-thio-alpha-D-ribose 1-phosphate: step 2/6. In terms of biological role, catalyzes the dehydration of methylthioribulose-1-phosphate (MTRu-1-P) into 2,3-diketo-5-methylthiopentyl-1-phosphate (DK-MTP-1-P). The chain is Methylthioribulose-1-phosphate dehydratase from Pseudomonas aeruginosa (strain LESB58).